Here is a 278-residue protein sequence, read N- to C-terminus: 4-deoxy-L-threo-5-hexosulose-uronate ketol-isomerase (278 aa).

Residues His196, His198, Glu203, and His245 each contribute to the Zn(2+) site.

This sequence belongs to the KduI family. The cofactor is Zn(2+).

It carries out the reaction 5-dehydro-4-deoxy-D-glucuronate = 3-deoxy-D-glycero-2,5-hexodiulosonate. It functions in the pathway glycan metabolism; pectin degradation; 2-dehydro-3-deoxy-D-gluconate from pectin: step 4/5. In terms of biological role, catalyzes the isomerization of 5-dehydro-4-deoxy-D-glucuronate to 3-deoxy-D-glycero-2,5-hexodiulosonate. This chain is 4-deoxy-L-threo-5-hexosulose-uronate ketol-isomerase, found in Salmonella choleraesuis (strain SC-B67).